A 214-amino-acid chain; its full sequence is Pyrrolidone-carboxylate peptidase (214 aa).

Residues E80, C143, and H166 contribute to the active site.

Belongs to the peptidase C15 family. As to quaternary structure, homotetramer.

It localises to the cytoplasm. It carries out the reaction Release of an N-terminal pyroglutamyl group from a polypeptide, the second amino acid generally not being Pro.. Functionally, removes 5-oxoproline from various penultimate amino acid residues except L-proline. This chain is Pyrrolidone-carboxylate peptidase, found in Klebsiella pneumoniae (strain 342).